A 251-amino-acid chain; its full sequence is Flap endonuclease Xni (251 aa).

Residue aspartate 104 coordinates Mg(2+). Positions 160–249 constitute a 5'-3' exonuclease domain; sequence VLPRQLPDYW…IDGNLQQLRL (90 aa). Positions 171, 172, 180, 182, and 185 each coordinate K(+). The interaction with DNA stretch occupies residues 184–189; that stretch reads GIGPKS.

This sequence belongs to the Xni family. Mg(2+) serves as cofactor. Requires K(+) as cofactor.

Functionally, has flap endonuclease activity. During DNA replication, flap endonucleases cleave the 5'-overhanging flap structure that is generated by displacement synthesis when DNA polymerase encounters the 5'-end of a downstream Okazaki fragment. The polypeptide is Flap endonuclease Xni (Salmonella choleraesuis (strain SC-B67)).